The sequence spans 460 residues: Jacalin-related lectin 36 (460 aa).

Residues 1 to 131 (MAAATMSWDD…LNSIDVHFAP (131 aa)) form the Jacalin-type lectin 1 domain. Ala-2 is subject to N-acetylalanine. Disordered regions lie at residues 34-57 (YDGDTHNPHHHGTPGKKSDGVSLS), 133-162 (PSSSSSSSSLSQANKVDAQGGKGGTSWDDG), and 291-334 (SGRG…PHEG). A compositionally biased stretch (low complexity) spans 133 to 143 (PSSSSSSSSLS). The Jacalin-type lectin 2 domain maps to 145–289 (ANKVDAQGGK…LNALGAYFAP (145 aa)). Residues 292 to 309 (GRGTPSATQPPGSAQPTG) are compositionally biased toward polar residues. Residues 313-457 (AKKLEAKGGN…IHQVGVHVKP (145 aa)) form the Jacalin-type lectin 3 domain.

It belongs to the jacalin lectin family.

The chain is Jacalin-related lectin 36 (JAL36) from Arabidopsis thaliana (Mouse-ear cress).